The sequence spans 134 residues: Large ribosomal subunit protein uL16c (134 aa).

The protein belongs to the universal ribosomal protein uL16 family. In terms of assembly, part of the 50S ribosomal subunit.

Its subcellular location is the plastid. It localises to the chloroplast. The protein is Large ribosomal subunit protein uL16c of Oltmannsiellopsis viridis (Marine flagellate).